The sequence spans 230 residues: Urease accessory protein UreG (230 aa).

33-40 (GPVGSGKT) provides a ligand contact to GTP.

It belongs to the SIMIBI class G3E GTPase family. UreG subfamily. In terms of assembly, homodimer. UreD, UreF and UreG form a complex that acts as a GTP-hydrolysis-dependent molecular chaperone, activating the urease apoprotein by helping to assemble the nickel containing metallocenter of UreC. The UreE protein probably delivers the nickel.

Its subcellular location is the cytoplasm. Facilitates the functional incorporation of the urease nickel metallocenter. This process requires GTP hydrolysis, probably effectuated by UreG. The polypeptide is Urease accessory protein UreG (Mycobacteroides abscessus (strain ATCC 19977 / DSM 44196 / CCUG 20993 / CIP 104536 / JCM 13569 / NCTC 13031 / TMC 1543 / L948) (Mycobacterium abscessus)).